A 312-amino-acid chain; its full sequence is Glycine--tRNA ligase alpha subunit (312 aa).

It belongs to the class-II aminoacyl-tRNA synthetase family. Tetramer of two alpha and two beta subunits.

It is found in the cytoplasm. It carries out the reaction tRNA(Gly) + glycine + ATP = glycyl-tRNA(Gly) + AMP + diphosphate. The sequence is that of Glycine--tRNA ligase alpha subunit from Nostoc punctiforme (strain ATCC 29133 / PCC 73102).